The following is a 596-amino-acid chain: Leucine zipper putative tumor suppressor 1 (596 aa).

A lipid anchor (N-myristoyl glycine) is attached at glycine 2. Disordered stretches follow at residues 136–193 (AILH…SYQL) and 295–324 (YEER…SQKS). Residues 153 to 162 (PPDKPKEQEL) show a composition bias toward basic and acidic residues. Residues 178–190 (SMSSLPTHSTSSS) show a composition bias toward low complexity. Positions 256 to 374 (ISTDECSIQE…SYEREKTSFG (119 aa)) form a coiled coil. The span at 295 to 310 (YEERPRRCRDELEGPE) shows a compositional bias: basic and acidic residues.

This sequence belongs to the LZTS family. Binds EEF1G, TLK2 and CDK1. In terms of processing, phosphorylated on serine residues. Hyperphosphorylated by the cAMP-dependent kinase PKA during cell-cycle progression. Highly expressed in testis, prostate, spleen, thymus, ovary and brain. Detected at lower levels in heart, placenta, small intestine, colon, liver, kidney, skeletal muscle and pancreas. Not detectable in primary tumors from breast and prostate and in many cancer cell lines.

The protein localises to the cytoplasm. The protein resides in the cell membrane. It localises to the cell projection. Its subcellular location is the dendritic spine. It is found in the postsynaptic density. The protein localises to the synapse. Functionally, involved in the regulation of cell growth. May stabilize the active CDC2-cyclin B1 complex and thereby contribute to the regulation of the cell cycle and the prevention of uncontrolled cell proliferation. May act as a tumor suppressor. The chain is Leucine zipper putative tumor suppressor 1 (LZTS1) from Homo sapiens (Human).